The following is a 307-amino-acid chain: MLNGILPLYKPRGMTSFDCVAKIRRLYQTRKVGHSGTLDPNVDGVLPICIGNATKVVQFLVASGKEYQGSITLGFATTTEDLDGEEIARQAVTEPFTSDQVDAALAQMTGAITQIPPMFSAVKVNGRRLYDYARSGETVERPERHITISSFKQRQASTYDSATQTQTIYFTVACSKGTYVRTLAVDVGKVLGVPAVMSDLTRLKSGGFTLDETVTFEEIAAHVDAGTAGALLAPIDKALSQYPRVTLTDEQWQRVKNGAFITAAEGQQTDPDANTMVALVYQNSLKCLYSYRPDEQRYKPFKMFAVN.

Catalysis depends on aspartate 39, which acts as the Nucleophile.

It belongs to the pseudouridine synthase TruB family. Type 1 subfamily.

It catalyses the reaction uridine(55) in tRNA = pseudouridine(55) in tRNA. In terms of biological role, responsible for synthesis of pseudouridine from uracil-55 in the psi GC loop of transfer RNAs. The sequence is that of tRNA pseudouridine synthase B from Lactiplantibacillus plantarum (strain ATCC BAA-793 / NCIMB 8826 / WCFS1) (Lactobacillus plantarum).